Here is an 89-residue protein sequence, read N- to C-terminus: Small ribosomal subunit protein uS15 (89 aa).

Belongs to the universal ribosomal protein uS15 family. Part of the 30S ribosomal subunit. Forms a bridge to the 50S subunit in the 70S ribosome, contacting the 23S rRNA.

Functionally, one of the primary rRNA binding proteins, it binds directly to 16S rRNA where it helps nucleate assembly of the platform of the 30S subunit by binding and bridging several RNA helices of the 16S rRNA. In terms of biological role, forms an intersubunit bridge (bridge B4) with the 23S rRNA of the 50S subunit in the ribosome. This is Small ribosomal subunit protein uS15 from Acidithiobacillus ferrooxidans (strain ATCC 23270 / DSM 14882 / CIP 104768 / NCIMB 8455) (Ferrobacillus ferrooxidans (strain ATCC 23270)).